The primary structure comprises 342 residues: S-adenosylmethionine:tRNA ribosyltransferase-isomerase (342 aa).

Belongs to the QueA family. In terms of assembly, monomer.

The protein localises to the cytoplasm. The enzyme catalyses 7-aminomethyl-7-carbaguanosine(34) in tRNA + S-adenosyl-L-methionine = epoxyqueuosine(34) in tRNA + adenine + L-methionine + 2 H(+). Its pathway is tRNA modification; tRNA-queuosine biosynthesis. Functionally, transfers and isomerizes the ribose moiety from AdoMet to the 7-aminomethyl group of 7-deazaguanine (preQ1-tRNA) to give epoxyqueuosine (oQ-tRNA). In Listeria innocua serovar 6a (strain ATCC BAA-680 / CLIP 11262), this protein is S-adenosylmethionine:tRNA ribosyltransferase-isomerase.